The primary structure comprises 369 residues: Coiled-coil domain-containing protein 149 (369 aa).

Residues 1–249 are a coiled coil; the sequence is MKENNNAEIL…AKYKQMAEAV (249 aa).

This sequence belongs to the CCDC149 family. In terms of tissue distribution, expressed in amphid and phasmid ciliated neurons, and also pharyngeal, touch receptor and motor neurons.

It localises to the cell projection. The protein resides in the cilium. The chain is Coiled-coil domain-containing protein 149 from Caenorhabditis elegans.